Here is a 612-residue protein sequence, read N- to C-terminus: Protein NorD (612 aa).

The disordered stretch occupies residues 220–246 (EGEGDLETPPSGQSRQRNGARRVDDSS). A VWFA domain is found at 420–609 (DLACLLLADL…FPPAAAVQAT (190 aa)).

Component of the anaerobic respiratory chain that transforms nitrate to dinitrogen (denitrification). The sequence is that of Protein NorD (norD) from Stutzerimonas stutzeri (Pseudomonas stutzeri).